Here is a 93-residue protein sequence, read N- to C-terminus: C-C motif chemokine 3 (93 aa).

Positions 1 to 24 are cleaved as a signal peptide; it reads MKVAVAALAVLLCAMALCSQVFSA. 2 disulfide bridges follow: Cys34–Cys58 and Cys35–Cys74.

This sequence belongs to the intercrine beta (chemokine CC) family. Self-associates. Also heterodimer of MIP-1-alpha(4-69) and MIP-1-beta(3-69). Interacts with CCR1.

It is found in the secreted. Its function is as follows. Monokine with inflammatory and chemokinetic properties. Binds to CCR1, CCR4 and CCR5. One of the major HIV-suppressive factors produced by CD8+ T-cells. Recombinant MIP-1-alpha induces a dose-dependent inhibition of different strains of HIV-1, HIV-2, and simian immunodeficiency virus (SIV). In Bos taurus (Bovine), this protein is C-C motif chemokine 3 (CCL3).